A 355-amino-acid chain; its full sequence is Protein-glutamate methylesterase/protein-glutamine glutaminase 3 (355 aa).

Residues 5 to 122 (KVLIVDDSAV…KQFLEESRVR (118 aa)) enclose the Response regulatory domain. The residue at position 56 (Asp-56) is a 4-aspartylphosphate. One can recognise a CheB-type methylesterase domain in the interval 165-355 (IQTTEKVVVV…IAREVLRLCG (191 aa)). Residues Ser-177, His-203, and Asp-299 contribute to the active site.

It belongs to the CheB family. Phosphorylated by CheA. Phosphorylation of the N-terminal regulatory domain activates the methylesterase activity.

Its subcellular location is the cytoplasm. The catalysed reaction is [protein]-L-glutamate 5-O-methyl ester + H2O = L-glutamyl-[protein] + methanol + H(+). The enzyme catalyses L-glutaminyl-[protein] + H2O = L-glutamyl-[protein] + NH4(+). In terms of biological role, involved in chemotaxis. Part of a chemotaxis signal transduction system that modulates chemotaxis in response to various stimuli. Catalyzes the demethylation of specific methylglutamate residues introduced into the chemoreceptors (methyl-accepting chemotaxis proteins or MCP) by CheR. Also mediates the irreversible deamidation of specific glutamine residues to glutamic acid. The protein is Protein-glutamate methylesterase/protein-glutamine glutaminase 3 of Geobacter metallireducens (strain ATCC 53774 / DSM 7210 / GS-15).